The chain runs to 804 residues: Lon protease (804 aa).

The tract at residues Met-1–Ser-23 is disordered. The Lon N-terminal domain occupies Leu-30–Ile-224. Gly-376–Thr-383 is a binding site for ATP. The 182-residue stretch at Thr-612–Asp-793 folds into the Lon proteolytic domain. Active-site residues include Ser-699 and Lys-742.

This sequence belongs to the peptidase S16 family. As to quaternary structure, homohexamer. Organized in a ring with a central cavity.

The protein localises to the cytoplasm. It catalyses the reaction Hydrolysis of proteins in presence of ATP.. Its function is as follows. ATP-dependent serine protease that mediates the selective degradation of mutant and abnormal proteins as well as certain short-lived regulatory proteins. Required for cellular homeostasis and for survival from DNA damage and developmental changes induced by stress. Degrades polypeptides processively to yield small peptide fragments that are 5 to 10 amino acids long. Binds to DNA in a double-stranded, site-specific manner. The sequence is that of Lon protease from Paraburkholderia phytofirmans (strain DSM 17436 / LMG 22146 / PsJN) (Burkholderia phytofirmans).